Consider the following 184-residue polypeptide: Isopentenyl-diphosphate Delta-isomerase (184 aa).

The Mn(2+) site is built by His-25 and His-32. In terms of domain architecture, Nudix hydrolase spans 30–164 (PLHLAFSCWL…PWAFSPWMVL (135 aa)). Cys-67 is a catalytic residue. His-69 contacts Mn(2+). Glu-87 contacts Mg(2+). Glu-114 and Glu-116 together coordinate Mn(2+). The active site involves Glu-116.

The protein belongs to the IPP isomerase type 1 family. Homodimer. Mg(2+) serves as cofactor. Requires Mn(2+) as cofactor.

Its subcellular location is the cytoplasm. It catalyses the reaction isopentenyl diphosphate = dimethylallyl diphosphate. It functions in the pathway isoprenoid biosynthesis; dimethylallyl diphosphate biosynthesis; dimethylallyl diphosphate from isopentenyl diphosphate: step 1/1. Catalyzes the 1,3-allylic rearrangement of the homoallylic substrate isopentenyl (IPP) to its highly electrophilic allylic isomer, dimethylallyl diphosphate (DMAPP). This chain is Isopentenyl-diphosphate Delta-isomerase, found in Klebsiella pneumoniae (strain 342).